A 164-amino-acid chain; its full sequence is Respiratory growth induced protein 2 (164 aa).

This sequence belongs to the RGI1 family.

The protein localises to the cytoplasm. Its function is as follows. Involved in the control of energetic metabolism and significantly contribute to cell fitness, especially under respiratory growth conditions. In Saccharomyces cerevisiae (strain RM11-1a) (Baker's yeast), this protein is Respiratory growth induced protein 2 (RGI2).